The following is an 89-amino-acid chain: MAHKKAGGSSRNGRDSAGRRLGVKKYGGQEVIPGNIIVRQRGTKVNPGANVGMGKDHTLFALTEGRVVFAKKSGGKAFVSVEPIAKAAE.

Positions 1–24 are disordered; the sequence is MAHKKAGGSSRNGRDSAGRRLGVK.

This sequence belongs to the bacterial ribosomal protein bL27 family.

The protein is Large ribosomal subunit protein bL27 of Maricaulis maris (strain MCS10) (Caulobacter maris).